A 1101-amino-acid polypeptide reads, in one-letter code: Serine/threonine-protein kinase PSK2 (1101 aa).

The residue at position 118 (T118) is a Phosphothreonine. Residues 841 to 1099 (FTILQVMGEG…IDEIYEDKWL (259 aa)) enclose the Protein kinase domain. ATP contacts are provided by residues 847–855 (MGEGAYGKV) and K870. The active-site Proton acceptor is D975.

This sequence belongs to the protein kinase superfamily. Ser/Thr protein kinase family.

It localises to the cytoplasm. The catalysed reaction is L-seryl-[protein] + ATP = O-phospho-L-seryl-[protein] + ADP + H(+). It carries out the reaction L-threonyl-[protein] + ATP = O-phospho-L-threonyl-[protein] + ADP + H(+). Serine/threonine-protein kinase involved in the control of sugar metabolism and translation. Phosphorylates UGP1, which is required for normal glycogen and beta-(1,6)-glucan synthesis. This phosphorylation shifts glucose partitioning toward cell wall glucan synthesis at the expense of glycogen synthesis. Also phosphorylates the glycogen synthase GSY2 and the translation factors CAF20, TIF11 and SRO9. The chain is Serine/threonine-protein kinase PSK2 (PSK2) from Saccharomyces cerevisiae (strain ATCC 204508 / S288c) (Baker's yeast).